Reading from the N-terminus, the 535-residue chain is Pre-mRNA-splicing factor SLU7-A (535 aa).

Residues 21 to 44 form a disordered region; it reads EEARKAGLAPAEVDEDGKEINPHI. Residues 96–109 form a CCHC-type zinc finger; sequence CQNCGAMTHTAKAC. Basic and acidic residues predominate over residues 176-190; sequence LKKLEEKNNNEKGDD. 2 disordered regions span residues 176 to 204 and 489 to 508; these read LKKLEEKNNNEKGDDANSDGEEDEDDLRV and EDLSRREEKDERKRKYNVKY. The span at 191 to 203 shows a compositional bias: acidic residues; that stretch reads ANSDGEEDEDDLR. Position 193 is a phosphoserine (Ser193). The Nuclear localization signal motif lies at 486 to 493; that stretch reads LKKEDLSR. Over residues 489 to 501 the composition is skewed to basic and acidic residues; the sequence is EDLSRREEKDERK.

Belongs to the SLU7 family. Mainly expressed in tissues undergoing cell proliferation, particularly in lateral organs.

Its subcellular location is the nucleus. Its function is as follows. Participates in the second catalytic step of pre-mRNA splicing, when the free hydroxyl group of exon I attacks the 3'-splice site to generate spliced mRNA and the excised lariat intron. Together with SMP2, involved in the timing of cell cycle arrest during leaf development, in a STRUWWELPETER (SWP) dependent manner; promotes cell proliferation in developing organs. In Arabidopsis thaliana (Mouse-ear cress), this protein is Pre-mRNA-splicing factor SLU7-A.